The sequence spans 423 residues: Ferrochelatase, mitochondrial (423 aa).

Residues 1–29 (MISRKIISTINSKTFYNKSLSYCTVNNNK) constitute a mitochondrion transit peptide. Cys-173 contacts [2Fe-2S] cluster. Active-site residues include His-207 and Asp-380. Cys-401, Cys-404, and Cys-411 together coordinate [2Fe-2S] cluster.

This sequence belongs to the ferrochelatase family. In terms of assembly, monomer. [2Fe-2S] cluster is required as a cofactor.

It is found in the mitochondrion inner membrane. The enzyme catalyses heme b + 2 H(+) = protoporphyrin IX + Fe(2+). The protein operates within porphyrin-containing compound metabolism; protoheme biosynthesis; protoheme from protoporphyrin-IX: step 1/1. Its function is as follows. Catalyzes the ferrous insertion into protoporphyrin IX. In Dictyostelium discoideum (Social amoeba), this protein is Ferrochelatase, mitochondrial (hemH).